Consider the following 167-residue polypeptide: 6,7-dimethyl-8-ribityllumazine synthase (167 aa).

5-amino-6-(D-ribitylamino)uracil-binding positions include F24, 58 to 60 (ALE), and 82 to 84 (AVV). 87–88 (ET) contributes to the (2S)-2-hydroxy-3-oxobutyl phosphate binding site. Catalysis depends on H90, which acts as the Proton donor. N115 contacts 5-amino-6-(D-ribitylamino)uracil. A (2S)-2-hydroxy-3-oxobutyl phosphate-binding site is contributed by R129.

The protein belongs to the DMRL synthase family.

It catalyses the reaction (2S)-2-hydroxy-3-oxobutyl phosphate + 5-amino-6-(D-ribitylamino)uracil = 6,7-dimethyl-8-(1-D-ribityl)lumazine + phosphate + 2 H2O + H(+). It functions in the pathway cofactor biosynthesis; riboflavin biosynthesis; riboflavin from 2-hydroxy-3-oxobutyl phosphate and 5-amino-6-(D-ribitylamino)uracil: step 1/2. In terms of biological role, catalyzes the formation of 6,7-dimethyl-8-ribityllumazine by condensation of 5-amino-6-(D-ribitylamino)uracil with 3,4-dihydroxy-2-butanone 4-phosphate. This is the penultimate step in the biosynthesis of riboflavin. The sequence is that of 6,7-dimethyl-8-ribityllumazine synthase from Cupriavidus pinatubonensis (strain JMP 134 / LMG 1197) (Cupriavidus necator (strain JMP 134)).